The sequence spans 168 residues: Lipoprotein signal peptidase (168 aa).

3 helical membrane-spanning segments follow: residues V6–T26, W70–L90, and A98–L118. Active-site residues include D123 and D141. A helical membrane pass occupies residues I139–T159.

It belongs to the peptidase A8 family.

Its subcellular location is the cell inner membrane. The catalysed reaction is Release of signal peptides from bacterial membrane prolipoproteins. Hydrolyzes -Xaa-Yaa-Zaa-|-(S,diacylglyceryl)Cys-, in which Xaa is hydrophobic (preferably Leu), and Yaa (Ala or Ser) and Zaa (Gly or Ala) have small, neutral side chains.. It participates in protein modification; lipoprotein biosynthesis (signal peptide cleavage). Functionally, this protein specifically catalyzes the removal of signal peptides from prolipoproteins. The sequence is that of Lipoprotein signal peptidase from Teredinibacter turnerae (strain ATCC 39867 / T7901).